The chain runs to 243 residues: Adenine phosphoribosyltransferase 1, chloroplastic (243 aa).

The N-terminal 52 residues, 1–52, are a transit peptide targeting the chloroplast; that stretch reads MQTIIISPLVSHRLCLARAVPCNRLLNNHHRAPPSIRLSNHRSTTSLRLFSS. At Q2 the chain carries N-acetylalanine.

It belongs to the purine/pyrimidine phosphoribosyltransferase family. Homodimer.

It localises to the plastid. It is found in the chloroplast. The protein localises to the cytoplasm. It catalyses the reaction AMP + diphosphate = 5-phospho-alpha-D-ribose 1-diphosphate + adenine. Its pathway is purine metabolism; AMP biosynthesis via salvage pathway; AMP from adenine: step 1/1. In terms of biological role, catalyzes a salvage reaction resulting in the formation of AMP, that is energically less costly than de novo synthesis. Contributes primarily to the recycling of adenine into adenylate nucleotides, but is also involved in the inactivation of cytokinins by phosphoribosylation. Catalyzes the conversion of cytokinins from free bases (active form) to the corresponding nucleotides (inactive form). The polypeptide is Adenine phosphoribosyltransferase 1, chloroplastic (APT1) (Arabidopsis thaliana (Mouse-ear cress)).